Consider the following 397-residue polypeptide: Probable sugar efflux transporter (397 aa).

12 helical membrane-spanning segments follow: residues 15-35 (VIVM…PVAL), 51-71 (GLMI…CMLM), 80-100 (LLIS…FAWN), 103-123 (VLLI…SITA), 137-157 (QALG…LPLG), 169-189 (TFTL…RLLP), 209-229 (PMLI…FTAY), 246-266 (KATA…VLFS), 277-297 (LLSS…VSGI), 299-319 (GAIF…SLAM), 333-353 (VATA…ALIG), and 365-385 (IGYV…LMFL).

This sequence belongs to the major facilitator superfamily. SotB (TC 2.A.1.2) family.

Its subcellular location is the cell inner membrane. In terms of biological role, involved in the efflux of sugars. The physiological role may be the reduction of the intracellular concentration of toxic sugars or sugar metabolites. This chain is Probable sugar efflux transporter, found in Mannheimia succiniciproducens (strain KCTC 0769BP / MBEL55E).